We begin with the raw amino-acid sequence, 498 residues long: ATP synthase subunit beta, chloroplastic (498 aa).

An ATP-binding site is contributed by 172 to 179; sequence GGAGVGKT.

This sequence belongs to the ATPase alpha/beta chains family. As to quaternary structure, F-type ATPases have 2 components, CF(1) - the catalytic core - and CF(0) - the membrane proton channel. CF(1) has five subunits: alpha(3), beta(3), gamma(1), delta(1), epsilon(1). CF(0) has four main subunits: a(1), b(1), b'(1) and c(9-12).

Its subcellular location is the plastid. It is found in the chloroplast thylakoid membrane. The catalysed reaction is ATP + H2O + 4 H(+)(in) = ADP + phosphate + 5 H(+)(out). In terms of biological role, produces ATP from ADP in the presence of a proton gradient across the membrane. The catalytic sites are hosted primarily by the beta subunits. In Nypa fruticans (Nypa palm), this protein is ATP synthase subunit beta, chloroplastic.